Reading from the N-terminus, the 722-residue chain is D-(-)-3-hydroxybutyrate oligomer hydrolase (722 aa).

The N-terminal stretch at 1 to 25 is a signal peptide; the sequence is MKTMQGKGSGRRLRGALLVTMAASG. Catalysis depends on Ser-319, which acts as the Charge relay system.

Belongs to the D-(-)-3-hydroxybutyrate oligomer hydrolase family.

It is found in the secreted. The catalysed reaction is (3R)-hydroxybutanoate dimer + H2O = 2 (R)-3-hydroxybutanoate + H(+). It participates in lipid metabolism; butanoate metabolism. Inhibited by diisopropylfluorophosphate (DFP). Its function is as follows. Participates in the degradation of poly-3-hydroxybutyrate (PHB). It works downstream of poly(3-hydroxybutyrate) depolymerase, hydrolyzing D(-)-3-hydroxybutyrate oligomers of various length (3HB-oligomers) into 3HB-monomers. This chain is D-(-)-3-hydroxybutyrate oligomer hydrolase, found in Ralstonia pickettii (Burkholderia pickettii).